The primary structure comprises 506 residues: Lysine--tRNA ligase (506 aa).

Mg(2+) is bound by residues Glu416 and Glu423.

The protein belongs to the class-II aminoacyl-tRNA synthetase family. In terms of assembly, homodimer. Mg(2+) is required as a cofactor.

It is found in the cytoplasm. The catalysed reaction is tRNA(Lys) + L-lysine + ATP = L-lysyl-tRNA(Lys) + AMP + diphosphate. This Bordetella parapertussis (strain 12822 / ATCC BAA-587 / NCTC 13253) protein is Lysine--tRNA ligase.